The following is a 256-amino-acid chain: Calsenilin (256 aa).

The interval 1–30 is disordered; sequence MQRAKEVMKVSDGSLLGEPGRTPLSKKEGV. Serine 14 bears the Phosphoserine mark. Lysine 26 is covalently cross-linked (Glycyl lysine isopeptide (Lys-Gly) (interchain with G-Cter in SUMO1)). 2 S-palmitoyl cysteine lipidation sites follow: cysteine 45 and cysteine 46. Serine 60 and serine 63 each carry phosphoserine. The EF-hand 1; degenerate domain occupies 67–123; sequence LELSAVRHQPEGLDQLQAQTKFTKKELQSLYRGFKNECPTGLVDEDTFKLIYSQFFP. A Glycyl lysine isopeptide (Lys-Gly) (interchain with G-Cter in SUMO1) cross-link involves residue lysine 90. EF-hand domains are found at residues 126-161, 162-197, and 210-245; these read DATTYAHFLFNAFDADGNGAIRFEDFVVGLSILLRG, TVHEKLKWAFNLYDINKDGYITKEEMLAIMKSIYDM, and APLEHVERFFQKMDRNQDGVVTIDEFLETCQKDENI. Residues aspartate 175, asparagine 177, aspartate 179, tyrosine 181, glutamate 186, aspartate 223, asparagine 225, aspartate 227, and glutamate 234 each coordinate Ca(2+). The segment at 243 to 256 is interaction with KCND2; sequence ENIMSSMQLFENVI.

This sequence belongs to the recoverin family. In terms of assembly, binds to DNA as a homomultimer. Dimerization is induced by binding to calcium. Interacts with the C-terminus of PSEN1 and PSEN2 and with PSEN2 CTF subunit. Associates with KCN1. Component of heteromultimeric potassium channels. Identified in potassium channel complexes containing KCND1, KCND2, KCND3, KCNIP1, KCNIP2, KCNIP3, KCNIP4, DPP6 and DPP10. Interacts with KCND2 and KCND3. Palmitoylated. Palmitoylation enhances association with the plasma membrane. In terms of processing, proteolytically cleaved by caspase-3.

The protein resides in the cytoplasm. It localises to the cell membrane. Its subcellular location is the endoplasmic reticulum. The protein localises to the golgi apparatus. It is found in the nucleus. Regulatory subunit of Kv4/D (Shal)-type voltage-gated rapidly inactivating A-type potassium channels, such as KCND2/Kv4.2 and KCND3/Kv4.3. Modulates channel expression at the cell membrane, gating characteristics, inactivation kinetics and rate of recovery from inactivation in a calcium-dependent and isoform-specific manner. Functionally, may play a role in the regulation of PSEN2 proteolytic processing and apoptosis. Together with PSEN2 involved in modulation of amyloid-beta formation. In terms of biological role, calcium-dependent transcriptional repressor that binds to the DRE element of genes including PDYN and FOS. Affinity for DNA is reduced upon binding to calcium and enhanced by binding to magnesium. Seems to be involved in nociception. In Bos taurus (Bovine), this protein is Calsenilin (KCNIP3).